The primary structure comprises 170 residues: Crossover junction endodeoxyribonuclease RuvC (170 aa).

Catalysis depends on residues Asp-9, Glu-70, and Asp-145. 3 residues coordinate Mg(2+): Asp-9, Glu-70, and Asp-145.

This sequence belongs to the RuvC family. As to quaternary structure, homodimer which binds Holliday junction (HJ) DNA. The HJ becomes 2-fold symmetrical on binding to RuvC with unstacked arms; it has a different conformation from HJ DNA in complex with RuvA. In the full resolvosome a probable DNA-RuvA(4)-RuvB(12)-RuvC(2) complex forms which resolves the HJ. Mg(2+) is required as a cofactor.

It localises to the cytoplasm. It carries out the reaction Endonucleolytic cleavage at a junction such as a reciprocal single-stranded crossover between two homologous DNA duplexes (Holliday junction).. In terms of biological role, the RuvA-RuvB-RuvC complex processes Holliday junction (HJ) DNA during genetic recombination and DNA repair. Endonuclease that resolves HJ intermediates. Cleaves cruciform DNA by making single-stranded nicks across the HJ at symmetrical positions within the homologous arms, yielding a 5'-phosphate and a 3'-hydroxyl group; requires a central core of homology in the junction. The consensus cleavage sequence is 5'-(A/T)TT(C/G)-3'. Cleavage occurs on the 3'-side of the TT dinucleotide at the point of strand exchange. HJ branch migration catalyzed by RuvA-RuvB allows RuvC to scan DNA until it finds its consensus sequence, where it cleaves and resolves the cruciform DNA. The protein is Crossover junction endodeoxyribonuclease RuvC of Chlamydia trachomatis serovar L2 (strain ATCC VR-902B / DSM 19102 / 434/Bu).